Here is a 342-residue protein sequence, read N- to C-terminus: HTH-type transcriptional regulator GbpR (342 aa).

One can recognise an HTH lysR-type domain in the interval 16–73; it reads LKLRHLQLFVALDEHRNLHRAAASLTMSQPAASKLLGDLEESLGVTLFERHGRGVEPN. The segment at residues 33–52 is a DNA-binding region (H-T-H motif); it reads LHRAAASLTMSQPAASKLLG.

Belongs to the LysR transcriptional regulatory family.

In terms of biological role, does not seem to be required for sbpA expression. The chain is HTH-type transcriptional regulator GbpR (gbpR) from Azospirillum brasilense.